The chain runs to 355 residues: MIRSLNFALRNCNKNILINSNKITINNGLLLKKNNFCTQSTSEVKVPTELVVQLRKKTQSPVQECKKALQASNNDMDGAIKWLLEKGKATAEKLKSRVSAEGIISVLVDSGSGKAVILEMNSETDFVSRGDIFRNLARDISKATLSNPISGGKLAENGILELDPTQVENIYPIKINITNEDGVAEEMTIKDSIVRIVSKLRENIVIRRASFIQPLNNNNNNSKSYISSYAHDSTSEKKDVGRLGSIVQFEYQGDCNNMNSLKEFANQLAIHIVSNSPSVVTVNDIPSSVLEECKNNNKNPESLYDDMVLYEQSYMYSPDHSVKQYLEILSEKLGIKNLSVKTFRRYAIGETAERV.

The N-terminal 46 residues, Met-1–Val-46, are a transit peptide targeting the mitochondrion.

Belongs to the EF-Ts family.

The protein resides in the mitochondrion. In terms of biological role, associates with the EF-Tu.GDP complex and induces the exchange of GDP to GTP. It remains bound to the aminoacyl-tRNA.EF-Tu.GTP complex up to the GTP hydrolysis stage on the ribosome. This is Elongation factor Ts, mitochondrial (tsfm) from Dictyostelium discoideum (Social amoeba).